The following is a 301-amino-acid chain: 4-hydroxybenzoate octaprenyltransferase (301 aa).

The next 8 membrane-spanning stretches (helical) occupy residues 34–54 (IGSLLLLWPTWWALWLAADGL), 57–77 (LWTLLVFTAGVWLTRSAGCVI), 108–128 (LWVFVVLMLVAFALVLTLNWL), 152–172 (LPQVYLGMAFGWGIPMAFAAV), 176–196 (VPLLGWLLYAANILWATAYDT), 221–241 (FDLIAQGILYALMAATLVLVG), 245–265 (DLGVAYWAGLAVAALLVAYEF), and 279–299 (AFLHNNWVGLAIFVGIAVAVA).

This sequence belongs to the UbiA prenyltransferase family. Requires Mg(2+) as cofactor.

The protein localises to the cell inner membrane. It catalyses the reaction all-trans-octaprenyl diphosphate + 4-hydroxybenzoate = 4-hydroxy-3-(all-trans-octaprenyl)benzoate + diphosphate. The protein operates within cofactor biosynthesis; ubiquinone biosynthesis. Catalyzes the prenylation of para-hydroxybenzoate (PHB) with an all-trans polyprenyl group. Mediates the second step in the final reaction sequence of ubiquinone-8 (UQ-8) biosynthesis, which is the condensation of the polyisoprenoid side chain with PHB, generating the first membrane-bound Q intermediate 3-octaprenyl-4-hydroxybenzoate. This chain is 4-hydroxybenzoate octaprenyltransferase, found in Xanthomonas euvesicatoria pv. vesicatoria (strain 85-10) (Xanthomonas campestris pv. vesicatoria).